Reading from the N-terminus, the 87-residue chain is Small polypeptide DEVIL 11 (87 aa).

Polar residues predominate over residues 1–11 (MASSSSLTRSG). Residues 1–47 (MASSSSLTRSGSVHLDEKWKLSKKDGGASRITRSSSTSSSSFNGKKQ) form a disordered region. Positions 14–27 (HLDEKWKLSKKDGG) are enriched in basic and acidic residues. The segment covering 29–41 (SRITRSSSTSSSS) has biased composition (low complexity). The interval 51 to 82 (AFTRKCARLVKEQRARFYIMRRCVIMLICWRD) is required for DVL/RTFL small polypeptide activity. A helical transmembrane segment spans residues 64-80 (RARFYIMRRCVIMLICW). A glycan (N-linked (GlcNAc...) asparagine) is linked at Asn-83.

It belongs to the DVL/RTFL small polypeptides family.

It is found in the cell membrane. Its function is as follows. Small polypeptide acting as a regulatory molecule which coordinates cellular responses required for differentiation, growth and development, probably by restricting polar cell proliferation in lateral organs and coordinating socket cell recruitment and differentiation at trichome sites. This is Small polypeptide DEVIL 11 from Arabidopsis thaliana (Mouse-ear cress).